The sequence spans 170 residues: MRKLIIEPLTKEAFAPFGDVIETDGSDHFMINNGSTMRFHRLADVQTAQPEDKAIISIFRAEALPMPLTIGMLERHPLGSQAFVPLLGNPFLIVVAPVGDVPESEATRAFVSNGRQGVNYHRGVWHHPVLTIEKRDDFLVVDRSGEGNNCDEHYFAESQLLVLDPHPLEG.

The protein belongs to the ureidoglycolate lyase family. In terms of assembly, homodimer. Requires Ni(2+) as cofactor.

The enzyme catalyses (S)-ureidoglycolate = urea + glyoxylate. It functions in the pathway nitrogen metabolism; (S)-allantoin degradation. In terms of biological role, catalyzes the catabolism of the allantoin degradation intermediate (S)-ureidoglycolate, generating urea and glyoxylate. Involved in the utilization of allantoin as nitrogen source. This Pseudomonas syringae pv. syringae (strain B728a) protein is Ureidoglycolate lyase.